The chain runs to 1076 residues: Cytadherence high molecular weight protein 3 (1076 aa).

The interval 264–284 (QGYDQGYDQQYDQQGYDQQGY) is fibronectin-binding. Residues 326-335 (QQPVEVAKPA) show a composition bias toward low complexity. Residues 326–351 (QQPVEVAKPAPTKPVGPKPQPGKKAT) are disordered. Pro residues predominate over residues 336–345 (PTKPVGPKPQ). A coiled-coil region spans residues 562 to 616 (EITKLEELVEIKTDNTESLNKLETLIDENKKIIDQFKQLKEEAKKSNSNINLEKV). Disordered stretches follow at residues 789–808 (SREH…TTRI) and 850–873 (RINP…EQQP). The segment covering 797–806 (PKAQHQQPTT) has biased composition (polar residues). Over residues 862–873 (YEQPDPYQEQQP) the composition is skewed to low complexity.

The protein resides in the cell projection. The protein localises to the attachment organelle membrane. Functionally, binds immobilized fibronectin. Its function is as follows. Component of the cytoskeleton-like structure which stabilizes the shape of the wall-less mycoplasma. This cytoskeleton-like network of accessory proteins containing HMW proteins 1 to 5 allows the proper anchoring of cytadhesin proteins in the mycoplasmal membrane at the attachment organelle. Essential for successful surface parasitism. The sequence is that of Cytadherence high molecular weight protein 3 (hlp3) from Mycoplasmoides gallisepticum (strain R(low / passage 15 / clone 2)) (Mycoplasma gallisepticum).